A 502-amino-acid polypeptide reads, in one-letter code: Lipoyl synthase, apicoplast (502 aa).

An N-terminal signal peptide occupies residues 1–16; sequence MNFLVLFFSYSIFVLP. Positions 192, 197, 203, 218, 222, 225, and 433 each coordinate [4Fe-4S] cluster. One can recognise a Radical SAM core domain in the interval 204 to 422; the sequence is WNIGTATIML…KDVGLKMGFK (219 aa).

The protein belongs to the radical SAM superfamily. Lipoyl synthase family. The cofactor is [4Fe-4S] cluster.

It localises to the plastid. The protein localises to the apicoplast. It carries out the reaction [[Fe-S] cluster scaffold protein carrying a second [4Fe-4S](2+) cluster] + N(6)-octanoyl-L-lysyl-[protein] + 2 oxidized [2Fe-2S]-[ferredoxin] + 2 S-adenosyl-L-methionine + 4 H(+) = [[Fe-S] cluster scaffold protein] + N(6)-[(R)-dihydrolipoyl]-L-lysyl-[protein] + 4 Fe(3+) + 2 hydrogen sulfide + 2 5'-deoxyadenosine + 2 L-methionine + 2 reduced [2Fe-2S]-[ferredoxin]. The protein operates within protein modification; protein lipoylation via endogenous pathway; protein N(6)-(lipoyl)lysine from octanoyl-[acyl-carrier-protein]: step 2/2. Functionally, catalyzes the radical-mediated insertion of two sulfur atoms into the C-6 and C-8 positions of the octanoyl moiety bound to the lipoyl domains of lipoate-dependent enzymes, thereby converting the octanoylated domains into lipoylated derivatives. This Plasmodium yoelii yoelii protein is Lipoyl synthase, apicoplast.